A 285-amino-acid chain; its full sequence is Nucleotide-binding protein Cphy_0331 (285 aa).

8–15 (GMSGAGKS) is a binding site for ATP. 59–62 (DIRS) serves as a coordination point for GTP.

It belongs to the RapZ-like family.

Its function is as follows. Displays ATPase and GTPase activities. The polypeptide is Nucleotide-binding protein Cphy_0331 (Lachnoclostridium phytofermentans (strain ATCC 700394 / DSM 18823 / ISDg) (Clostridium phytofermentans)).